Reading from the N-terminus, the 233-residue chain is Aspartate/glutamate leucyltransferase (233 aa).

The protein belongs to the R-transferase family. Bpt subfamily.

Its subcellular location is the cytoplasm. It carries out the reaction N-terminal L-glutamyl-[protein] + L-leucyl-tRNA(Leu) = N-terminal L-leucyl-L-glutamyl-[protein] + tRNA(Leu) + H(+). The catalysed reaction is N-terminal L-aspartyl-[protein] + L-leucyl-tRNA(Leu) = N-terminal L-leucyl-L-aspartyl-[protein] + tRNA(Leu) + H(+). In terms of biological role, functions in the N-end rule pathway of protein degradation where it conjugates Leu from its aminoacyl-tRNA to the N-termini of proteins containing an N-terminal aspartate or glutamate. The chain is Aspartate/glutamate leucyltransferase from Vibrio parahaemolyticus serotype O3:K6 (strain RIMD 2210633).